Here is a 331-residue protein sequence, read N- to C-terminus: MKRIFSGVKPTGHLTLGNYLGAVRRWVDVDQHGADALFCVVDLHALTVDHDPARVRRLSRQAATLMLAAGLDPELCTVFVQSHVDEHARLSYLMECVATDGEMRRMIQYREKAAREQQRGGSVRLSLLTYPVLMAADILAYGTDEVPVGDDQTQHVELTRDLAVRFNQRYGHTFVVPRATRPEVAARVMNLQEPTSKMGKSDDVGPGIVYLLDEPEAVRKKVMRAVTDSGRDVVYDRESRPGVSNLLEILAACEGGSPEALSGAYASYGALKKDTAEAVVELLRPLQERHKALCAEPGYVEGVLRDGARRARELARPRVDAAYRAIGLLEA.

Residues 9–11 and 17–18 contribute to the ATP site; these read KPT and GN. The 'HIGH' region motif lies at 10 to 18; it reads PTGHLTLGN. An L-tryptophan-binding site is contributed by Asp137. Residues 149–151, Val188, and 197–201 contribute to the ATP site; these read GDD and KMGKS. Positions 197-201 match the 'KMSKS' region motif; that stretch reads KMGKS.

Belongs to the class-I aminoacyl-tRNA synthetase family. Homodimer.

It localises to the cytoplasm. The enzyme catalyses tRNA(Trp) + L-tryptophan + ATP = L-tryptophyl-tRNA(Trp) + AMP + diphosphate + H(+). Its function is as follows. Catalyzes the attachment of tryptophan to tRNA(Trp). This Streptomyces avermitilis (strain ATCC 31267 / DSM 46492 / JCM 5070 / NBRC 14893 / NCIMB 12804 / NRRL 8165 / MA-4680) protein is Tryptophan--tRNA ligase 1.